Reading from the N-terminus, the 184-residue chain is Muscle-specific protein 20 (184 aa).

Residues 17–122 enclose the Calponin-homology (CH) domain; it reads PEMDKEAQEW…NTIFALGRAT (106 aa). One copy of the Calponin-like repeat lies at 157 to 181; it reads VGLQAGSNKGATQAGQNLGAGRKIL.

Belongs to the calponin family. Found in synchronous muscle; not found in asynchronous indirect flight muscle.

The chain is Muscle-specific protein 20 (Mp20) from Drosophila melanogaster (Fruit fly).